We begin with the raw amino-acid sequence, 448 residues long: Histidinol dehydrogenase (448 aa).

Residues tyrosine 136, glutamine 197, and asparagine 220 each contribute to the NAD(+) site. Substrate-binding residues include serine 243, glutamine 265, and histidine 268. Positions 265 and 268 each coordinate Zn(2+). Catalysis depends on proton acceptor residues glutamate 333 and histidine 334. Substrate is bound by residues histidine 334, aspartate 367, glutamate 421, and histidine 426. Aspartate 367 is a Zn(2+) binding site. Histidine 426 serves as a coordination point for Zn(2+).

The protein belongs to the histidinol dehydrogenase family. Zn(2+) is required as a cofactor.

The enzyme catalyses L-histidinol + 2 NAD(+) + H2O = L-histidine + 2 NADH + 3 H(+). It participates in amino-acid biosynthesis; L-histidine biosynthesis; L-histidine from 5-phospho-alpha-D-ribose 1-diphosphate: step 9/9. Its function is as follows. Catalyzes the sequential NAD-dependent oxidations of L-histidinol to L-histidinaldehyde and then to L-histidine. The polypeptide is Histidinol dehydrogenase (Pseudomonas savastanoi pv. phaseolicola (strain 1448A / Race 6) (Pseudomonas syringae pv. phaseolicola (strain 1448A / Race 6))).